The primary structure comprises 711 residues: Pentatricopeptide repeat-containing protein At5g46580, chloroplastic (711 aa).

A chloroplast-targeting transit peptide spans 1-43 (MATVLTTAIDVCFNPQNSDTKKHSLFLKPSLFRQSRSRKLNIS). PPR repeat units lie at residues 185 to 219 (ETIFYNVTMKSLRFGRQFQLIEEMALEMVKDGVEL), 220 to 254 (DNITYSTIITCAKRCNLYNKAIEWFERMYKTGLMP), 255 to 289 (DEVTYSAILDVYSKSGKVEEVLSLYERAVATGWKP), 290 to 324 (DAIAFSVLGKMFGEAGDYDGIRYVLQEMKSMDVKP), 325 to 359 (NVVVYNTLLEAMGRAGKPGLARSLFNEMLEAGLTP), 360 to 394 (NEKTLTALVKIYGKARWARDALQLWEEMKAKKWPM), 395 to 425 (DFILYNTLLNMCADIGLEEEAERLFNDMKES), 431 to 465 (DNFSYTAMLNIYGSGGKAEKAMELFEEMLKAGVQV), 466 to 500 (NVMGCTCLVQCLGKAKRIDDVVYVFDLSIKRGVKP), and 501 to 535 (DDRLCGCLLSVMALCESSEDAEKVMACLERANKKL). Residues 614–696 (LDVRSLSVGA…IFVATKEDLV (83 aa)) form the Smr domain.

The protein belongs to the PPR family. P subfamily.

The protein resides in the plastid. The protein localises to the chloroplast. This chain is Pentatricopeptide repeat-containing protein At5g46580, chloroplastic, found in Arabidopsis thaliana (Mouse-ear cress).